The following is a 701-amino-acid chain: Elongation factor G 1 (701 aa).

Residues 5-281 (SKYRNIGIFA…AVVDYLPSPT (277 aa)) enclose the tr-type G domain. GTP is bound by residues 14–21 (AHVDAGKT), 78–82 (DTPGH), and 132–135 (NKLD).

This sequence belongs to the TRAFAC class translation factor GTPase superfamily. Classic translation factor GTPase family. EF-G/EF-2 subfamily.

It is found in the cytoplasm. Functionally, catalyzes the GTP-dependent ribosomal translocation step during translation elongation. During this step, the ribosome changes from the pre-translocational (PRE) to the post-translocational (POST) state as the newly formed A-site-bound peptidyl-tRNA and P-site-bound deacylated tRNA move to the P and E sites, respectively. Catalyzes the coordinated movement of the two tRNA molecules, the mRNA and conformational changes in the ribosome. This is Elongation factor G 1 from Colwellia psychrerythraea (strain 34H / ATCC BAA-681) (Vibrio psychroerythus).